The chain runs to 120 residues: Large ribosomal subunit protein eL18 (120 aa).

Belongs to the eukaryotic ribosomal protein eL18 family.

The protein is Large ribosomal subunit protein eL18 of Pyrococcus abyssi (strain GE5 / Orsay).